The sequence spans 299 residues: Glycine--tRNA ligase alpha subunit (299 aa).

This sequence belongs to the class-II aminoacyl-tRNA synthetase family. Tetramer of two alpha and two beta subunits.

The protein localises to the cytoplasm. The catalysed reaction is tRNA(Gly) + glycine + ATP = glycyl-tRNA(Gly) + AMP + diphosphate. The sequence is that of Glycine--tRNA ligase alpha subunit from Dichelobacter nodosus (strain VCS1703A).